The chain runs to 309 residues: Porphobilinogen deaminase (309 aa).

S-(dipyrrolylmethanemethyl)cysteine is present on Cys-242.

It belongs to the HMBS family. In terms of assembly, monomer. The cofactor is dipyrromethane.

The enzyme catalyses 4 porphobilinogen + H2O = hydroxymethylbilane + 4 NH4(+). The protein operates within porphyrin-containing compound metabolism; protoporphyrin-IX biosynthesis; coproporphyrinogen-III from 5-aminolevulinate: step 2/4. In terms of biological role, tetrapolymerization of the monopyrrole PBG into the hydroxymethylbilane pre-uroporphyrinogen in several discrete steps. This Syntrophobacter fumaroxidans (strain DSM 10017 / MPOB) protein is Porphobilinogen deaminase.